Reading from the N-terminus, the 205-residue chain is SCO2-like protein RP587 (205 aa).

Cu cation-binding residues include Cys82, Cys86, and His172.

The protein belongs to the SCO1/2 family.

The chain is SCO2-like protein RP587 from Rickettsia prowazekii (strain Madrid E).